Reading from the N-terminus, the 298-residue chain is Protease HtpX homolog (298 aa).

2 consecutive transmembrane segments (helical) span residues 15 to 35 and 39 to 59; these read YVMIGFAILVLFIGAAVGYVF and AMAGIIMAAVIAAIYMAMMIA. Histidine 143 contributes to the Zn(2+) binding site. Glutamate 144 is a catalytic residue. Residue histidine 147 coordinates Zn(2+). 2 consecutive transmembrane segments (helical) span residues 158–178 and 197–217; these read IALALSSAIAMLVNIGMRSFW and IVMMIISIVLVILGPIATTIA. Zn(2+) is bound at residue glutamate 226.

This sequence belongs to the peptidase M48B family. Zn(2+) serves as cofactor.

It is found in the cell membrane. In Pediococcus pentosaceus (strain ATCC 25745 / CCUG 21536 / LMG 10740 / 183-1w), this protein is Protease HtpX homolog.